The primary structure comprises 354 residues: Uroporphyrinogen decarboxylase (354 aa).

Substrate-binding positions include Arg27 to Arg31, Asp77, Tyr154, Thr209, and His327.

Belongs to the uroporphyrinogen decarboxylase family. In terms of assembly, homodimer.

It is found in the cytoplasm. The enzyme catalyses uroporphyrinogen III + 4 H(+) = coproporphyrinogen III + 4 CO2. It participates in porphyrin-containing compound metabolism; protoporphyrin-IX biosynthesis; coproporphyrinogen-III from 5-aminolevulinate: step 4/4. In terms of biological role, catalyzes the decarboxylation of four acetate groups of uroporphyrinogen-III to yield coproporphyrinogen-III. The chain is Uroporphyrinogen decarboxylase from Escherichia coli O6:K15:H31 (strain 536 / UPEC).